Here is a 182-residue protein sequence, read N- to C-terminus: MNEWLNVAPELLALLIFVSRVIDVSLGTFRTIVIFRGYKALAAFIGFFEIMIWLVAAGQVFKNLDQWYLALAYAGGFSMGNYVGMWIENRFAIGNELVRCLSFNRDVLAEKIREQGFKVISFDGDMGTDKLVELLFIVEKRRNVPALIKLIKELDASAVYSVSDVKSVYEGPEPLPRRLFFR.

Helical transmembrane passes span 7-27, 41-61, and 67-87; these read VAPE…VSLG, LAAF…GQVF, and WYLA…GMWI.

It belongs to the UPF0316 family.

Its subcellular location is the cell membrane. The protein is UPF0316 protein Sde_0566 of Saccharophagus degradans (strain 2-40 / ATCC 43961 / DSM 17024).